A 194-amino-acid polypeptide reads, in one-letter code: MSMYNYVKEAWKVPANSYVKELQWSRMQDWRKEPSVIRVERPTRIDRARNLGYKAKQGIVVVRVSVRRGGLRKPRPKHSKKPSTLGINKITMAKSIQRIAEERAAKKYPNLEVLNSYWVGQDGKQKWYEVILVDSCHPSIKSDKSYNWLCKGTHKGRATRGLTSAGKKGRGLMYKGKGAEKVRPSVRANSKKAK.

Residues 160-194 (RGLTSAGKKGRGLMYKGKGAEKVRPSVRANSKKAK) form a disordered region.

Belongs to the eukaryotic ribosomal protein eL15 family.

In Methanococcus maripaludis (strain C6 / ATCC BAA-1332), this protein is Large ribosomal subunit protein eL15.